The following is a 164-amino-acid chain: Peptide deformylase (164 aa).

Fe cation contacts are provided by cysteine 87 and histidine 129. Glutamate 130 is a catalytic residue. Residue histidine 133 coordinates Fe cation.

Belongs to the polypeptide deformylase family. It depends on Fe(2+) as a cofactor.

It catalyses the reaction N-terminal N-formyl-L-methionyl-[peptide] + H2O = N-terminal L-methionyl-[peptide] + formate. Removes the formyl group from the N-terminal Met of newly synthesized proteins. Requires at least a dipeptide for an efficient rate of reaction. N-terminal L-methionine is a prerequisite for activity but the enzyme has broad specificity at other positions. This chain is Peptide deformylase, found in Thermotoga sp. (strain RQ2).